The chain runs to 380 residues: Cytochrome b (380 aa).

The next 4 membrane-spanning stretches (helical) occupy residues 34–54 (FGSL…LLAM), 78–99 (WLIR…YLHI), 114–134 (WNTG…GYVL), and 179–199 (FFAL…IHLT). Heme b-binding residues include His-84 and His-98. 2 residues coordinate heme b: His-183 and His-197. His-202 contacts a ubiquinone. A run of 4 helical transmembrane segments spans residues 227–247 (LKDI…ALFS), 289–309 (LGGV…PFLH), 321–341 (ISQL…WVGS), and 348–368 (FIII…ILFP).

This sequence belongs to the cytochrome b family. In terms of assembly, the cytochrome bc1 complex contains 11 subunits: 3 respiratory subunits (MT-CYB, CYC1 and UQCRFS1), 2 core proteins (UQCRC1 and UQCRC2) and 6 low-molecular weight proteins (UQCRH/QCR6, UQCRB/QCR7, UQCRQ/QCR8, UQCR10/QCR9, UQCR11/QCR10 and a cleavage product of UQCRFS1). This cytochrome bc1 complex then forms a dimer. Requires heme b as cofactor.

The protein localises to the mitochondrion inner membrane. Component of the ubiquinol-cytochrome c reductase complex (complex III or cytochrome b-c1 complex) that is part of the mitochondrial respiratory chain. The b-c1 complex mediates electron transfer from ubiquinol to cytochrome c. Contributes to the generation of a proton gradient across the mitochondrial membrane that is then used for ATP synthesis. This Pelecanoides garnotii (Peruvian diving petrel) protein is Cytochrome b (MT-CYB).